Here is a 654-residue protein sequence, read N- to C-terminus: MTQLAIGEATPHGATYDGHGVNFTLFSAHAERVELCVFDSRGNERRYDLPGRRGDVWHGYLAGARPGLRYGYRVHGPWQPAQGHRFNPAKLLLDPYARQVEGELKDHPLLHGGHDEPDYRDNAAVAPKSVVISDHYDWEDDAAPRTPWGKTVIYEAHVKGLTYLHPELPQEIRGTYKALGHPVMVAYFKQLGITALELLPVAQFASEPRLQRMGLTNYWGYNPMAMFALHPAWASSPETALDEFRDAVKALHRAGIEVILDIVLNHSAELDLDGPTFSLRGIDNRSYYWIRDDGDYHNWTGCGNTLNLSHPGVVEYACECLRYWMETCHVDGFRFDLASVMGRTPTFRQDAPLFAAIKACPVLSTVKLIAEPWDIGEGGYQVGNFPPPFAEWNDHFRDAARRFWLPRNLTTGEFACRFAASSDVFKRNGRAPGASVNLLTAHDGFTLRDCVCFNQKHNEANGEENRDGTNSNYSDNHGKEGLGGPLDLMERRRDSIHALLATLLLSQGTPMLLAGDEHGHSQHGNNNAYCQDNALTWLDWQQANRGLTTFTAALIRLRQQIPALTGNSWWEEGDGNVRWLNKNAQPLSADEWQNGPKLMQILLSDRFLIAINATLEVTDIVLPEGEWRAVPPFAGEDNPVITAVWQGLCVFQRG.

Residue Asp-336 is the Nucleophile of the active site. The active-site Proton donor is Glu-371. The segment at 459–484 is disordered; sequence EANGEENRDGTNSNYSDNHGKEGLGG.

This sequence belongs to the glycosyl hydrolase 13 family.

The enzyme catalyses Hydrolysis of (1-&gt;6)-alpha-D-glucosidic linkages to branches with degrees of polymerization of three or four glucose residues in limit dextrin.. It participates in glycan degradation; glycogen degradation. Its function is as follows. Removes maltotriose and maltotetraose chains that are attached by 1,6-alpha-linkage to the limit dextrin main chain, generating a debranched limit dextrin. In Salmonella typhi, this protein is Glycogen debranching enzyme.